We begin with the raw amino-acid sequence, 938 residues long: MTDYKNTLNLPDTGFPMRGDLAKREPGMLERWYEQDLYGIICQARKGKKTFILHDGPPYANGSIHIGHSVNKILKDIIIKSKGLMGYDSPYVPGWDCHGLPIELKVEQLIGKPGEKVSAAEFRTACRRYAAEQVEGQKKDFIRLGVLGDWEHPYLTMNFATEANIIRALGKIIANGHLHKGAKPVHWCIDCRSALAEAEVEYYDRTSPSIDVAFAADDVRAVAAKFGAADFAGQISLIIWTTTPWTLPANRAIAVHPDFDYQLVEVEGQGYILAADLVDSVMARAGITCWTVLGSAKGSALELLRFRHPFMGFDVPAILGQHVTLDAGTGAVHTAPGHGPDDYVIGQQYGLEVANPVGPDGCYLPGTLPALDGLQVFKANDVVINLLCDSGALLHVEKLQHSYPHCWRHKTSIIFRATPQWFVSMDQRGLRKQSLAEIKDVQWIPGWGQARIETMVANRPDWCISRQRTWGVPMALFVHNETEALHPRTIELMESVAQRVEQDGIQAWWDLDPAEILGDDAAHYHKVPDTLDVWFDSGSTHSSIVAVRPEFEGHAPDMYLEGSDQHRGWFMSSLMISTAMHGKAPYRQVLTHGFTVDGQGRKMSKSVGNVVSPQQVMDKLGADILRLWVASTDYTGEMAVSDEILKRSADAYRRIRNTARFLLANLNGFDPARHSVSPEQMVVLDRWAVGRAQAAQAEIVAAYDSYDFHNVVQRMMQFCSVEMGSFYLDIIKDRQYTTKADSIARRSCQTALYHIIEALVRWMAPIMSFTADEIWGFMPGERAQYVFTEEWYDGLFGLDAAQPLNDAYWQILLQVRSETNKVIEQARADKRIGGSLEARVTLYAEPDLAASLRELGDELYFTLLTSNAVVADYADAGDDAVQCEGLKGLKIALAKAEGEKCPRCWHYETDIGQHADHPEICGRCVTNVAGPGEERKFV.

The short motif at 58 to 68 (PYANGSIHIGH) is the 'HIGH' region element. Residue Glu-561 coordinates L-isoleucyl-5'-AMP. A 'KMSKS' region motif is present at residues 602–606 (KMSKS). Lys-605 is a binding site for ATP. 4 residues coordinate Zn(2+): Cys-901, Cys-904, Cys-921, and Cys-924.

This sequence belongs to the class-I aminoacyl-tRNA synthetase family. IleS type 1 subfamily. Monomer. The cofactor is Zn(2+).

Its subcellular location is the cytoplasm. It carries out the reaction tRNA(Ile) + L-isoleucine + ATP = L-isoleucyl-tRNA(Ile) + AMP + diphosphate. In terms of biological role, catalyzes the attachment of isoleucine to tRNA(Ile). As IleRS can inadvertently accommodate and process structurally similar amino acids such as valine, to avoid such errors it has two additional distinct tRNA(Ile)-dependent editing activities. One activity is designated as 'pretransfer' editing and involves the hydrolysis of activated Val-AMP. The other activity is designated 'posttransfer' editing and involves deacylation of mischarged Val-tRNA(Ile). The protein is Isoleucine--tRNA ligase of Sodalis glossinidius (strain morsitans).